The following is a 107-amino-acid chain: Anti-adapter protein IraM (107 aa).

This sequence belongs to the IraM/RssC family.

It localises to the cytoplasm. Its function is as follows. Inhibits RpoS proteolysis by regulating RssB activity, thereby increasing the stability of the sigma stress factor RpoS during magnesium starvation. In Escherichia coli (strain K12 / MC4100 / BW2952), this protein is Anti-adapter protein IraM.